We begin with the raw amino-acid sequence, 86 residues long: Small ribosomal subunit protein uS17 (86 aa).

It belongs to the universal ribosomal protein uS17 family. In terms of assembly, part of the 30S ribosomal subunit.

Its function is as follows. One of the primary rRNA binding proteins, it binds specifically to the 5'-end of 16S ribosomal RNA. The sequence is that of Small ribosomal subunit protein uS17 from Streptococcus pyogenes serotype M3 (strain ATCC BAA-595 / MGAS315).